Reading from the N-terminus, the 472-residue chain is 3-isopropylmalate dehydratase large subunit (472 aa).

The [4Fe-4S] cluster site is built by cysteine 352, cysteine 413, and cysteine 416.

Belongs to the aconitase/IPM isomerase family. LeuC type 1 subfamily. Heterodimer of LeuC and LeuD. It depends on [4Fe-4S] cluster as a cofactor.

It carries out the reaction (2R,3S)-3-isopropylmalate = (2S)-2-isopropylmalate. It participates in amino-acid biosynthesis; L-leucine biosynthesis; L-leucine from 3-methyl-2-oxobutanoate: step 2/4. Its function is as follows. Catalyzes the isomerization between 2-isopropylmalate and 3-isopropylmalate, via the formation of 2-isopropylmaleate. The protein is 3-isopropylmalate dehydratase large subunit of Laribacter hongkongensis (strain HLHK9).